A 406-amino-acid chain; its full sequence is Cysteine desulfurase (406 aa).

Lys-226 carries the N6-(pyridoxal phosphate)lysine modification. The Cysteine persulfide intermediate role is filled by Cys-364.

The protein belongs to the class-V pyridoxal-phosphate-dependent aminotransferase family. Csd subfamily. In terms of assembly, homodimer. Interacts with SufE and the SufBCD complex composed of SufB, SufC and SufD. The interaction with SufE is required to mediate the direct transfer of the sulfur atom from the S-sulfanylcysteine. Pyridoxal 5'-phosphate serves as cofactor.

The protein localises to the cytoplasm. It carries out the reaction (sulfur carrier)-H + L-cysteine = (sulfur carrier)-SH + L-alanine. The enzyme catalyses L-selenocysteine + AH2 = hydrogenselenide + L-alanine + A + H(+). It participates in cofactor biosynthesis; iron-sulfur cluster biosynthesis. Functionally, cysteine desulfurases mobilize the sulfur from L-cysteine to yield L-alanine, an essential step in sulfur metabolism for biosynthesis of a variety of sulfur-containing biomolecules. Component of the suf operon, which is activated and required under specific conditions such as oxidative stress and iron limitation. Acts as a potent selenocysteine lyase in vitro, that mobilizes selenium from L-selenocysteine. Selenocysteine lyase activity is however unsure in vivo. This Escherichia fergusonii (strain ATCC 35469 / DSM 13698 / CCUG 18766 / IAM 14443 / JCM 21226 / LMG 7866 / NBRC 102419 / NCTC 12128 / CDC 0568-73) protein is Cysteine desulfurase.